A 62-amino-acid chain; its full sequence is Sperm protamine P1 (62 aa).

The disordered stretch occupies residues 1 to 62 (MARYRHSRSR…RYSRRRRRRY (62 aa)).

It belongs to the protamine P1 family. As to expression, testis.

The protein resides in the nucleus. Its subcellular location is the chromosome. Functionally, protamines substitute for histones in the chromatin of sperm during the haploid phase of spermatogenesis. They compact sperm DNA into a highly condensed, stable and inactive complex. The protein is Sperm protamine P1 (PRM1) of Notamacropus eugenii (Tammar wallaby).